Reading from the N-terminus, the 246-residue chain is Bis(5'-nucleosyl)-tetraphosphatase PrpE [asymmetrical] (246 aa).

The protein belongs to the PrpE family. The cofactor is Ni(2+).

The enzyme catalyses P(1),P(4)-bis(5'-guanosyl) tetraphosphate + H2O = GMP + GTP + 2 H(+). In terms of biological role, asymmetrically hydrolyzes Ap4p to yield AMP and ATP. The polypeptide is Bis(5'-nucleosyl)-tetraphosphatase PrpE [asymmetrical] (Bacillus thuringiensis subsp. konkukian (strain 97-27)).